The primary structure comprises 717 residues: Ribosomal RNA large subunit methyltransferase K/L (717 aa).

Positions 44–155 (DAYKVCIYSY…KQFVNVFLCL (112 aa)) constitute a THUMP domain.

Belongs to the methyltransferase superfamily. RlmKL family.

It localises to the cytoplasm. It catalyses the reaction guanosine(2445) in 23S rRNA + S-adenosyl-L-methionine = N(2)-methylguanosine(2445) in 23S rRNA + S-adenosyl-L-homocysteine + H(+). The catalysed reaction is guanosine(2069) in 23S rRNA + S-adenosyl-L-methionine = N(2)-methylguanosine(2069) in 23S rRNA + S-adenosyl-L-homocysteine + H(+). In terms of biological role, specifically methylates the guanine in position 2445 (m2G2445) and the guanine in position 2069 (m7G2069) of 23S rRNA. The polypeptide is Ribosomal RNA large subunit methyltransferase K/L (Francisella tularensis subsp. holarctica (strain FTNF002-00 / FTA)).